A 318-amino-acid polypeptide reads, in one-letter code: Nisin-resistance protein (318 aa).

A helical transmembrane segment spans residues isoleucine 7–lysine 28.

Its subcellular location is the cell membrane. In Lactococcus lactis subsp. lactis (Streptococcus lactis), this protein is Nisin-resistance protein (nsr).